Here is a 362-residue protein sequence, read N- to C-terminus: tRNA-specific 2-thiouridylase MnmA (362 aa).

ATP-binding positions include 9–16 and Met-35; that span reads GMSGGVDS. The interval 95 to 97 is interaction with target base in tRNA; it reads NPD. Cys-100 acts as the Nucleophile in catalysis. A disulfide bond links Cys-100 and Cys-196. Gly-124 is a binding site for ATP. An interaction with tRNA region spans residues 146-148; sequence KDQ. The Cysteine persulfide intermediate role is filled by Cys-196. An interaction with tRNA region spans residues 308–309; that stretch reads RY.

It belongs to the MnmA/TRMU family.

The protein localises to the cytoplasm. The enzyme catalyses S-sulfanyl-L-cysteinyl-[protein] + uridine(34) in tRNA + AH2 + ATP = 2-thiouridine(34) in tRNA + L-cysteinyl-[protein] + A + AMP + diphosphate + H(+). In terms of biological role, catalyzes the 2-thiolation of uridine at the wobble position (U34) of tRNA, leading to the formation of s(2)U34. This Nitrosomonas europaea (strain ATCC 19718 / CIP 103999 / KCTC 2705 / NBRC 14298) protein is tRNA-specific 2-thiouridylase MnmA.